The primary structure comprises 417 residues: Serine hydroxymethyltransferase (417 aa).

Residues leucine 121 and 125 to 127 (GHL) contribute to the (6S)-5,6,7,8-tetrahydrofolate site. Lysine 229 bears the N6-(pyridoxal phosphate)lysine mark. (6S)-5,6,7,8-tetrahydrofolate is bound at residue 355-357 (SPF).

It belongs to the SHMT family. Homodimer. Requires pyridoxal 5'-phosphate as cofactor.

It is found in the cytoplasm. It catalyses the reaction (6R)-5,10-methylene-5,6,7,8-tetrahydrofolate + glycine + H2O = (6S)-5,6,7,8-tetrahydrofolate + L-serine. The protein operates within one-carbon metabolism; tetrahydrofolate interconversion. Its pathway is amino-acid biosynthesis; glycine biosynthesis; glycine from L-serine: step 1/1. In terms of biological role, catalyzes the reversible interconversion of serine and glycine with tetrahydrofolate (THF) serving as the one-carbon carrier. This reaction serves as the major source of one-carbon groups required for the biosynthesis of purines, thymidylate, methionine, and other important biomolecules. Also exhibits THF-independent aldolase activity toward beta-hydroxyamino acids, producing glycine and aldehydes, via a retro-aldol mechanism. The sequence is that of Serine hydroxymethyltransferase from Salmonella paratyphi C (strain RKS4594).